Here is a 340-residue protein sequence, read N- to C-terminus: MANKNAYAQSGVDVEAGYEVVERIKKHVARTERAGVMGALGGFGGMFDLSKTGVKEPVLISGTDGVGTKLMLAIKYDKHDTIGQDCVAMCVNDIIAAGAEPLYFLDYVATGKNEPAKLEQVVAGVAEGCVQAGAALIGGETAEMPGMYGEDDYDLAGFAVGVAEKSQIIDGSKVVEGDVLLGLASSGIHSNGYSLVRRVFADYTGEEVLPELEGKKLKEVLLEPTRIYVKAVLPLIKEELVNGIAHITGGGFIENVPRMFADDLAAEIDESKVPVLPIFKALEKYGQIKHEEMFEIFNMGVGLMLAVSPENVERVKELLDEAVYEIGRIVKKENESVIIK.

Belongs to the AIR synthase family.

It localises to the cytoplasm. It carries out the reaction 2-formamido-N(1)-(5-O-phospho-beta-D-ribosyl)acetamidine + ATP = 5-amino-1-(5-phospho-beta-D-ribosyl)imidazole + ADP + phosphate + H(+). It functions in the pathway purine metabolism; IMP biosynthesis via de novo pathway; 5-amino-1-(5-phospho-D-ribosyl)imidazole from N(2)-formyl-N(1)-(5-phospho-D-ribosyl)glycinamide: step 2/2. The chain is Phosphoribosylformylglycinamidine cyclo-ligase from Streptococcus pneumoniae (strain CGSP14).